We begin with the raw amino-acid sequence, 147 residues long: uncharacterized protein (147 aa).

Residues 13-35 (NSRINLLGILVLNVVCGKSSIFF) form a helical membrane-spanning segment.

The protein localises to the membrane. This is an uncharacterized protein from Saccharomyces cerevisiae (strain ATCC 204508 / S288c) (Baker's yeast).